The sequence spans 553 residues: Urocanate hydratase (553 aa).

Residues 51-52 (GG), glutamine 129, 175-177 (GMG), glutamate 195, arginine 200, 241-242 (NA), 262-266 (QTSAH), 272-273 (YL), and tyrosine 321 each bind NAD(+). Residue cysteine 409 is part of the active site. Position 491 (glycine 491) interacts with NAD(+).

The protein belongs to the urocanase family. NAD(+) serves as cofactor.

Its subcellular location is the cytoplasm. The enzyme catalyses 4-imidazolone-5-propanoate = trans-urocanate + H2O. The protein operates within amino-acid degradation; L-histidine degradation into L-glutamate; N-formimidoyl-L-glutamate from L-histidine: step 2/3. In terms of biological role, catalyzes the conversion of urocanate to 4-imidazolone-5-propionate. This is Urocanate hydratase from Sphingopyxis alaskensis (strain DSM 13593 / LMG 18877 / RB2256) (Sphingomonas alaskensis).